The sequence spans 8515 residues: Nonribosomal peptide synthetase 8 (8515 aa).

Adenylation regions lie at residues 59–736 and 1163–1705; these read REHH…YRCS and AKLS…EWVE. The interval 587-1159 is condensation 1; sequence RRVVQWLENL…TVGEVALVGD (573 aa). Residues 615 to 691 form the Carrier 1 domain; the sequence is EPETAMERRL…ELAPRVKVAE (77 aa). The residue at position 652 (serine 652) is an O-(pantetheine 4'-phosphoryl)serine. Positions 1732-1808 constitute a Carrier 2 domain; sequence RGLTPTETVI…KLGRHADHSS (77 aa). Serine 1769 is subject to O-(pantetheine 4'-phosphoryl)serine. Positions 1830–2273 are epimerase 1; it reads LSPIQQWFFE…TLYDCPLAAL (444 aa). Residues 2301–2709 are condensation 2; it reads SHIQEGILLS…RSPEAVLHDL (409 aa). Positions 2733–3266 are adenylation 3; that stretch reads QCLHWLIEQW…RMILSWLSEP (534 aa). Positions 3286–3362 constitute a Carrier 3 domain; sequence TTLGPVEKQM…KVTPRTISLS (77 aa). Serine 3323 carries the O-(pantetheine 4'-phosphoryl)serine modification. The interval 3406-3819 is condensation 3; that stretch reads SPMQEGILLA…DNSGCSVKTV (414 aa). The 77-residue stretch at 3857-3933 folds into the Carrier 4 domain; sequence EPTNLIALTV…EVFEHARFSD (77 aa). Serine 3894 is subject to O-(pantetheine 4'-phosphoryl)serine. Positions 3953–4392 are epimerase 2; it reads LSPIQKLHFH…TPSDFQLLSL (440 aa). Positions 4420–4823 are condensation 4; that stretch reads PCSPMQEGIL…ARPRARLGTI (404 aa). The adenylation 4 stretch occupies residues 4837–5363; the sequence is WNEQARRPVV…RKVNKWLESF (527 aa). The Carrier 5 domain occupies 5385-5461; sequence PPLTPIQQTI…SLAACATAII (77 aa). Residue serine 5422 is modified to O-(pantetheine 4'-phosphoryl)serine. Positions 5508 to 5923 are condensation 5; that stretch reads SPMQEGILFS…SLVDHLSLCS (416 aa). The segment at 5941 to 6459 is adenylation 5; the sequence is ELRQCLHELI…GKVDRQALRR (519 aa). Residues 6482 to 6558 enclose the Carrier 6 domain; the sequence is PISTAEEQQM…DLATLLESPA (77 aa). Residue serine 6519 is modified to O-(pantetheine 4'-phosphoryl)serine. The condensation 6 stretch occupies residues 6606 to 6992; the sequence is CTPLQESLMA…SQMKSVMGTL (387 aa). The tract at residues 7030–7544 is adenylation 6; it reads VEDLIISRAQ…SSGKLARKGV (515 aa). A Carrier 7 domain is found at 7575-7651; that stretch reads IASSSVERAI…HLASREDLTA (77 aa). Serine 7612 bears the O-(pantetheine 4'-phosphoryl)serine mark. Residues 7670-8119 are epimerase 3; that stretch reads LTPIQRFFFC…DYPRARLDYT (450 aa). Positions 8164–8504 are condensation 7; that stretch reads HFIWKIAGTK…DPTSPLQFAD (341 aa). Residues 8488–8500 show a composition bias toward polar residues; that stretch reads AVNSVSSDPTSPL. The tract at residues 8488-8515 is disordered; sequence AVNSVSSDPTSPLQFADGQDPMPVSHQP.

The protein belongs to the NRP synthetase family.

Nonribosomal peptide synthesis (NRPS) is a key mechanism responsible for the biosynthesis of bioactive metabolites which are potentially contributing to organismal virulence. However, contarary to other nonribosomal peptide synthases, NRPS8 does not encode a secreted peptide, but has more a structural role since it is involved in germ tube formation. The protein is Nonribosomal peptide synthetase 8 (NRPS8) of Aspergillus fumigatus (strain ATCC MYA-4609 / CBS 101355 / FGSC A1100 / Af293) (Neosartorya fumigata).